The following is a 118-amino-acid chain: MSQATATQAKGIQLSDAALKHLLALKEQQGKDLCLRVGVRQGGCSGMSYMMDFEEPNRATEHDEVFDYEGFQIICDRKSLLYLYGLMLDYSNALIGGGFQFTNPNANQTCGCGKSFGV.

The protein belongs to the HesB/IscA family. Ycf83 subfamily.

This is an uncharacterized protein from Synechocystis sp. (strain ATCC 27184 / PCC 6803 / Kazusa).